The following is a 134-amino-acid chain: MGPRRKPQTPRRRPSSPAPGPSRQSSSVGSQTLRRRQKFMWLKEIKTLQKSTDLLFRKKPFSMVVREICEKFSRGVDFWWQAQALLALQEAAEAFLIHLFEDAYLLSLHAGRVTLFPKDIQLTRRIRGFEGGLP.

A compositionally biased stretch (basic residues) spans 1 to 14 (MGPRRKPQTPRRRP). A disordered region spans residues 1-34 (MGPRRKPQTPRRRPSSPAPGPSRQSSSVGSQTLR). Gly2 bears the N,N,N-trimethylglycine mark. Ser16 and Ser22 each carry phosphoserine. The important for flexibility of DNA ends that protrude from nucleosomes stretch occupies residues 34–48 (RRRQKFMWLKEIKTL). The segment at 35–134 (RRQKFMWLKE…RIRGFEGGLP (100 aa)) is H3-like. A Phosphoserine modification is found at Ser62. Residues 69–110 (CEKFSRGVDFWWQAQALLALQEAAEAFLIHLFEDAYLLSLHA) form a CATD region.

Belongs to the histone H3 family. Component of centromeric nucleosomes, where DNA is wrapped around a histone octamer core. The octamer contains two molecules each of H2A, H2B, CENPA and H4 assembled in one CENPA-H4 heterotetramer and two H2A-H2B heterodimers. CENPA modulates the DNA-binding characteristics of nucleosomes so that protruding DNA ends have higher flexibility than in nucleosomes containing conventional histone H3. Inhibits binding of histone H1 to nucleosomes, since histone H1 binds preferentially to rigid DNA linkers that protrude from nucleosomes. Nucleosomes containing CENPA also contain histone H2A variants such as MACROH2A and H2A.Z/H2AZ1. The CENPA-H4 heterotetramer is more compact and structurally more rigid than corresponding H3-H4 heterotetramers. Can assemble into nucleosomes that contain both CENPA and histone H3.3; these nucleosomes interact with a single CENPC chain. Heterotrimer composed of HJURP, CENPA and histone H4, where HJURP interacts with the dimer formed by CENPA and histone H4 and prevents tetramerization of CENPA and H4. Component of the CENPA-NAC complex, at least composed of CENPA, CENPC, CENPH, CENPM, CENPN, CENPT and CENPU. Interacts (via CATD domain) with HJURP; the interaction is direct and is required for its localization to centromeres. Interacts with CENPC, CENPN and CENPT; interaction is direct. Part of a centromere complex consisting of CENPA, CENPT and CENPW. Identified in centromere complexes containing histones H2A, H2B and H4, and at least CENPA, CENPB, CENPC, CENPT, CENPN, HJURP, SUPT16H, SSRP1 and RSF1. Can self-associate. The CENPA-H4 heterotetramer can bind DNA by itself (in vitro). Interacts with CDK1, PPP1CA and RBBP7. Poly-ADP-ribosylated by PARP1. In terms of processing, trimethylated by NTMT1 at the N-terminal glycine after cleavage of Met-1. Methylation is low before incorporation into nucleosomes and increases with cell cycle progression, with the highest levels in mitotic nucleosomes. Post-translationally, phosphorylated by CDK1 at Ser-62 during early mitosis; this abolishes association with chromatin and centromeres, prevents interaction with HJURP and thereby prevents premature assembly of CENPA into centromeres. Dephosphorylated at Ser-62 by PPP1CA during late mitosis.

Its subcellular location is the nucleus. The protein localises to the chromosome. The protein resides in the centromere. Histone H3-like nucleosomal protein that is specifically found in centromeric nucleosomes. Replaces conventional H3 in the nucleosome core of centromeric chromatin that serves as an assembly site for the inner kinetochore. The presence of CENPA subtly modifies the nucleosome structure and the way DNA is wrapped around the nucleosome and gives rise to protruding DNA ends that are less well-ordered and rigid compared to nucleosomes containing histone H3. May serve as an epigenetic mark that propagates centromere identity through replication and cell division. Required for recruitment and assembly of kinetochore proteins, and as a consequence required for progress through mitosis, chromosome segregation and cytokinesis. This chain is Histone H3-like centromeric protein A (Cenpa), found in Mus musculus (Mouse).